The primary structure comprises 378 residues: Biotin synthase (378 aa).

The region spanning 68 to 292 (NEVQISTLLS…IAVTRICCPS (225 aa)) is the Radical SAM core domain. Cysteine 83, cysteine 87, and cysteine 90 together coordinate [4Fe-4S] cluster. [2Fe-2S] cluster-binding residues include cysteine 129, cysteine 160, cysteine 220, and arginine 296.

Belongs to the radical SAM superfamily. Biotin synthase family. As to quaternary structure, homodimer. The cofactor is [4Fe-4S] cluster. It depends on [2Fe-2S] cluster as a cofactor.

The catalysed reaction is (4R,5S)-dethiobiotin + (sulfur carrier)-SH + 2 reduced [2Fe-2S]-[ferredoxin] + 2 S-adenosyl-L-methionine = (sulfur carrier)-H + biotin + 2 5'-deoxyadenosine + 2 L-methionine + 2 oxidized [2Fe-2S]-[ferredoxin]. The protein operates within cofactor biosynthesis; biotin biosynthesis; biotin from 7,8-diaminononanoate: step 2/2. Functionally, catalyzes the conversion of dethiobiotin (DTB) to biotin by the insertion of a sulfur atom into dethiobiotin via a radical-based mechanism. This is Biotin synthase from Psychrobacter arcticus (strain DSM 17307 / VKM B-2377 / 273-4).